The chain runs to 601 residues: Elongation factor 4 (601 aa).

A tr-type G domain is found at 2-184; the sequence is DLIRNFSIIA…EMIARVPPPT (183 aa). GTP is bound by residues 14-19 and 131-134; these read DHGKST and NKID.

Belongs to the TRAFAC class translation factor GTPase superfamily. Classic translation factor GTPase family. LepA subfamily.

It is found in the cell inner membrane. The catalysed reaction is GTP + H2O = GDP + phosphate + H(+). Required for accurate and efficient protein synthesis under certain stress conditions. May act as a fidelity factor of the translation reaction, by catalyzing a one-codon backward translocation of tRNAs on improperly translocated ribosomes. Back-translocation proceeds from a post-translocation (POST) complex to a pre-translocation (PRE) complex, thus giving elongation factor G a second chance to translocate the tRNAs correctly. Binds to ribosomes in a GTP-dependent manner. This is Elongation factor 4 from Polynucleobacter asymbioticus (strain DSM 18221 / CIP 109841 / QLW-P1DMWA-1) (Polynucleobacter necessarius subsp. asymbioticus).